Here is a 243-residue protein sequence, read N- to C-terminus: R-spondin-2 (243 aa).

The N-terminal stretch at 1 to 21 (MQFQLFSFALIILNCVDYSHC) is a signal peptide. Disulfide bonds link Cys-40-Cys-46, Cys-43-Cys-52, Cys-55-Cys-74, Cys-78-Cys-93, Cys-96-Cys-104, Cys-101-Cys-110, Cys-113-Cys-124, Cys-128-Cys-141, Cys-145-Cys-187, Cys-156-Cys-163, and Cys-196-Cys-203. The FU repeat unit spans residues 90 to 134 (MNRCSRCRIENCDSCFSRDFCIKCKSGFYSLKGQCFEECPEGFAP). Residues 144–204 (GCEVGPWSEW…RCKMAIRHCP (61 aa)) enclose the TSP type-1 domain. Asn-160 carries N-linked (GlcNAc...) asparagine glycosylation. The segment covering 204–224 (PGGKRTTKKKDKRNKKKKKKL) has biased composition (basic residues). Positions 204–243 (PGGKRTTKKKDKRNKKKKKKLLERAQEQHSVVLATDRSSQ) are disordered.

It belongs to the R-spondin family. Binds heparin.

The protein resides in the secreted. In terms of biological role, activator of the canonical Wnt signaling pathway by acting as a ligand for lgr4-6 receptors. Upon binding to lgr4-6 (lgr4, lgr5 or lgr6), lgr4-6 associate with phosphorylated lrp6 and frizzled receptors that are activated by extracellular Wnt receptors, triggering the canonical Wnt signaling pathway to increase expression of target genes. Acts both in the canonical Wnt/beta-catenin-dependent pathway and in non-canonical Wnt signaling pathway. Activates neural markers and promotes muscle formation. Overexpression blocks activin, nodal and BMP4 signaling, suggesting that it may negatively regulate the TGF-beta pathway. During embryonic development, plays a crucial role in limb specification, amplifying the Wnt signaling pathway independently of LGR4-6 receptors, possibly by acting as a direct antagonistic ligand to RNF43 and ZNRF3, hence governing the number of limbs an embryo should form. The sequence is that of R-spondin-2 (rspo2) from Xenopus laevis (African clawed frog).